A 375-amino-acid chain; its full sequence is Beta-1,3-N-acetylglucosaminyltransferase lunatic fringe (375 aa).

At 1–8 (MLKNWGKK) the chain is on the cytoplasmic side. A helical; Signal-anchor for type II membrane protein transmembrane segment spans residues 9–29 (LLLSIVGATLTCLLVLVVDQQ). Over 30 to 375 (SRHMLETQSD…TPWCPWKAAY (346 aa)) the chain is Lumenal. Residues 53 to 73 (DLDPANPGDGGDPANSAQDSG) are disordered. R125 serves as a coordination point for substrate. N163 is a glycosylation site (N-linked (GlcNAc...) asparagine). Intrachain disulfides connect C164–C175 and C193–C256. Substrate is bound at residue D197. Residue D198 participates in Mn(2+) binding. The active site involves D286. Residue H310 coordinates Mn(2+). C360 and C369 are oxidised to a cystine.

The protein belongs to the glycosyltransferase 31 family. The cofactor is Mn(2+). Requires Co(2+) as cofactor. In terms of processing, a soluble form may be derived from the membrane form by proteolytic processing. As to expression, detected in the neural tube, the eye and the otic vesicle, expression coincides with the region that produces the medial, intermediate and lateral neurons.

The protein resides in the golgi apparatus membrane. It carries out the reaction 3-O-(alpha-L-fucosyl)-L-threonyl-[EGF-like domain protein] + UDP-N-acetyl-alpha-D-glucosamine = 3-O-(N-acetyl-beta-D-glucosaminyl-(1-&gt;3)-alpha-L-fucosyl)-L-threonyl-[EGF-like domain protein] + UDP + H(+). The catalysed reaction is 3-O-(alpha-L-fucosyl)-L-seryl-[EGF-like domain protein] + UDP-N-acetyl-alpha-D-glucosamine = 3-O-(N-acetyl-beta-D-glucosaminyl-(1-&gt;3)-alpha-L-fucosyl)-L-seryl-[EGF-like domain protein] + UDP + H(+). Its function is as follows. Glycosyltransferase that initiates the elongation of O-linked fucose residues attached to EGF-like repeats in the extracellular domain of Notch molecules. Essential mediator of somite segmentation and patterning. May be involved in mesoderm development. The protein is Beta-1,3-N-acetylglucosaminyltransferase lunatic fringe (lfng) of Xenopus laevis (African clawed frog).